The primary structure comprises 600 residues: Sodium- and chloride-dependent betaine transporter (600 aa).

Positions 1–31 (MGTSEHVPLPTDEAKAKELEQSQHSEEPDRG) are disordered. The Cytoplasmic portion of the chain corresponds to 1–38 (MGTSEHVPLPTDEAKAKELEQSQHSEEPDRGQWTGKFD). Positions 12-30 (DEAKAKELEQSQHSEEPDR) are enriched in basic and acidic residues. Helical transmembrane passes span 39 to 59 (FLMS…FPYL), 68 to 88 (FLVV…LMEV), and 116 to 136 (VVIA…AMFY). At 137–207 (MISSIAWVFP…DTGDISEFGG (71 aa)) the chain is on the extracellular side. An N-linked (GlcNAc...) asparagine glycan is attached at N165. 2 helical membrane-spanning segments follow: residues 208-228 (IQWE…FALW) and 237-257 (FVYF…IRGL). N-linked (GlcNAc...) asparagine glycosylation occurs at N273. 7 helical membrane passes run 286–306 (AGTQ…ALGS), 321–341 (MCFI…SILG), 378–398 (VFAV…QVCM), 420–440 (SLGI…THSG), 454–474 (GYAL…GFGA), 499–519 (FCAP…YHPV), and 536–556 (WFLS…YLFF). Residues 557–600 (TNKHLTLKERVRKGLNLDGSFESPAKKNLVNNAEELKFIESSSQ) are Cytoplasmic-facing.

It belongs to the sodium:neurotransmitter symporter (SNF) family. Highly expressed in the head, the excretory canal, tail hypodermal cells, epidermis and vulval epithelial cells. Expressed in the excretory canal-associated neuron and in some non-amphidial sensory neurons in the head (at protein level).

The protein resides in the cell membrane. Betaine transporter dependent on Na(+) and Cl(-) ions that functions primarily in the epidermis to clear betaine from the extracellular space. Elicits current in response to betaine but not in response to GABA, L-carnitine, sarcosine, glycine or dimethylglycine. This Caenorhabditis elegans protein is Sodium- and chloride-dependent betaine transporter.